Consider the following 246-residue polypeptide: tRNA pseudouridine synthase A (246 aa).

The active-site Nucleophile is Asp-52. Tyr-111 contacts substrate.

It belongs to the tRNA pseudouridine synthase TruA family. As to quaternary structure, homodimer.

The catalysed reaction is uridine(38/39/40) in tRNA = pseudouridine(38/39/40) in tRNA. In terms of biological role, formation of pseudouridine at positions 38, 39 and 40 in the anticodon stem and loop of transfer RNAs. The protein is tRNA pseudouridine synthase A of Rhodopseudomonas palustris (strain BisA53).